Consider the following 495-residue polypeptide: Cysteine--tRNA ligase (495 aa).

A Zn(2+)-binding site is contributed by C35. The short motif at 37 to 47 (PTVYSNVHLGN) is the 'HIGH' region element. Positions 230, 255, and 259 each coordinate Zn(2+). The short motif at 287–291 (KMSKS) is the 'KMSKS' region element. Position 290 (K290) interacts with ATP.

The protein belongs to the class-I aminoacyl-tRNA synthetase family. In terms of assembly, monomer. Zn(2+) serves as cofactor.

It is found in the cytoplasm. It carries out the reaction tRNA(Cys) + L-cysteine + ATP = L-cysteinyl-tRNA(Cys) + AMP + diphosphate. This chain is Cysteine--tRNA ligase, found in Flavobacterium psychrophilum (strain ATCC 49511 / DSM 21280 / CIP 103535 / JIP02/86).